The following is a 7705-amino-acid chain: Copine family protein 2 (7705 aa).

Disordered regions lie at residues 1 to 61, 269 to 360, 372 to 408, 464 to 492, 506 to 538, 560 to 614, 1301 to 1358, 4381 to 4427, and 6779 to 6800; these read MNDY…RHSE, KEGN…NNSQ, SERK…HQQP, GDRA…TSSV, STEP…TADG, DERA…QGPP, NRSE…DQQV, ELEP…RSES, and RDEH…GKFT. The segment covering 12-25 has biased composition (low complexity); sequence SSQKSNNQKISNNS. A compositionally biased stretch (basic and acidic residues) spans 269 to 282; sequence KEGNNPSCCRERGT. The span at 302–313 shows a compositional bias: low complexity; that stretch reads STSTKVAVTSAS. The span at 318-336 shows a compositional bias: basic residues; the sequence is IKDHKKQLKKEKEKKKKMD. A compositionally biased stretch (basic and acidic residues) spans 372–404; it reads SERKTAKQREQELLQRSERRSGGRTHSHEEYRR. Over residues 522–532 the composition is skewed to polar residues; it reads ASLSSVQQKQP. Over residues 560-587 the composition is skewed to basic and acidic residues; it reads DERAKDFLRGDRSSRLSPQSERKNERQI. Polar residues predominate over residues 588-597; that stretch reads QIRQQSSGPT. 2 stretches are compositionally biased toward basic and acidic residues: residues 598 to 611 and 1301 to 1335; these read NRRE…EKRQ and NRSE…HTSE. Positions 4397–4409 are enriched in low complexity; sequence RQSRVYRSSSQVR. Basic and acidic residues-rich tracts occupy residues 4411–4427 and 6779–6797; these read PSEE…RSES and RDEH…RDGG. A VWFA domain is found at 7475–7673; sequence NLIFGIDYTK…FHKVMFNAPN (199 aa).

This sequence belongs to the copine family. Expressed in body wall muscle.

The polypeptide is Copine family protein 2 (cpna-2) (Caenorhabditis elegans).